A 1247-amino-acid polypeptide reads, in one-letter code: Leucine-rich repeat-containing protein 53 (1247 aa).

LRR repeat units lie at residues 34–55 (TTRV…NLSL), 58–79 (NLAL…ALHG), 82–102 (MLRT…TDHT), 108–129 (SLQV…WFRN), 132–153 (GLTR…SFGG), 158–179 (SLRY…AFRP), and 182–203 (QLQE…FTPL). Positions 214–271 (NQWSCTCDLHPLARFLRNYIKSSAHTLRNAKDLNCQPSTAAVAAAQSVLRLSETNCDS) constitute an LRRCT domain. The chain crosses the membrane as a helical span at residues 294–314 (LLTVLGFAGAVGLTCLGLVVF). Disordered stretches follow at residues 828 to 866 (SAGH…EDAT), 887 to 927 (VLPF…SPRN), and 1223 to 1247 (ENSA…LETE). 2 stretches are compositionally biased toward polar residues: residues 898–927 (DQGT…SPRN) and 1238–1247 (YATTSPLETE).

Its subcellular location is the membrane. The chain is Leucine-rich repeat-containing protein 53 (LRRC53) from Homo sapiens (Human).